The chain runs to 481 residues: Bestrophin homolog 17 (481 aa).

At 1-27 (MTVSYQLDVSSGNPLLFLRLLGRWRGS) the chain is on the cytoplasmic side. Residues 28–48 (IWKSVVGDLFVWLLFYYAIYF) traverse the membrane as a helical segment. Residues 49–95 (AYRYAFSKQLQTVFEEISIHTDDRMKYLPLTFMLGFFVTTVFERWRS) lie on the Extracellular side of the membrane. A helical transmembrane segment spans residues 96–116 (ALNVMPFIESVALSVAVLLPG). Residues 117–230 (KGREDRLTRR…AMETLIKFDA (114 aa)) are Cytoplasmic-facing. A helical transmembrane segment spans residues 231 to 251 (IPIPIAYPQVVFLAVRVYFAI). The Extracellular portion of the chain corresponds to 252–274 (CLVSRQFLISDMKSKTQMDWPVP). The helical transmembrane segment at 275–295 (IMTVLEFIFVIGWMKVAEVLL) threads the bilayer. Residues 296-481 (NPLGEDDDDF…SSEESVDKKG (186 aa)) lie on the Cytoplasmic side of the membrane. Residues 427–481 (AGMLNKSTQPDRPTMETVSEEHEPSHFYRGDRVHSSDSGLSKTQQSSEESVDKKG) are disordered. A compositionally biased stretch (basic and acidic residues) spans 445-461 (SEEHEPSHFYRGDRVHS). Over residues 462–474 (SDSGLSKTQQSSE) the composition is skewed to polar residues.

The protein belongs to the anion channel-forming bestrophin (TC 1.A.46) family. Calcium-sensitive chloride channel subfamily. In terms of assembly, forms oligomers.

Its subcellular location is the cell membrane. Forms chloride channels. The sequence is that of Bestrophin homolog 17 from Caenorhabditis elegans.